We begin with the raw amino-acid sequence, 366 residues long: DNA-directed RNA polymerase II subunit GRINL1A (366 aa).

Residues 1–23 form a disordered region; it reads MFSLPRGFEPPAPEDLGRQSSAE. Positions 15 to 39 form a coiled coil; sequence DLGRQSSAELRERLRRQERLLRNEK. Positions 29–68 are important for transcription repressor activity; sequence RRQERLLRNEKFICKLPDKGKKISDTVAKLKAAISEREEV. Disordered regions lie at residues 88–140, 158–182, 201–225, and 237–280; these read ATTR…HRGN, IRARAPSSEVKEHLPQHSVSSQEEE, ADQSEPSEENTSTENFPELQSETPK, and ARNP…RRAR. A compositionally biased stretch (basic and acidic residues) spans 90–100; that stretch reads TRADTDVDKAQ. Residues 101–127 show a composition bias toward low complexity; that stretch reads SSDLMLDTSSLDPDCSSIDIKSSKSTS. The interval 225 to 296 is interaction with Pol II; that stretch reads KKPHYMKVLE…TAARLLPLHH (72 aa). Polar residues predominate over residues 251 to 272; the sequence is VLPTQQSDSPSHCQRGQSPASS. Position 268 is a phosphoserine (Ser-268). Positions 297-312 are important for transcription repressor activity; sequence LPAQLLSIEESLALQR. The stretch at 299–333 forms a coiled coil; that stretch reads AQLLSIEESLALQREQKQNYEEMQAKLAAQKLAER. The tract at residues 313-338 is interaction with Pol II; it reads EQKQNYEEMQAKLAAQKLAERLNIKM. The disordered stretch occupies residues 338–366; the sequence is MQSYNPEGESSGRYREVRDEADAQSSDEC. Residues 347–358 are compositionally biased toward basic and acidic residues; the sequence is SSGRYREVRDEA.

The protein belongs to the GRINL1 family. In terms of assembly, component of the Pol II(G) complex, which contains the RNA polymerase II (Pol II) core complex subunits and POLR2M isoform 1. Pol II(G) appears to be an abundant form of Pol II. In terms of processing, dephosphorylated at Ser-268 by the PNUTS-PP1 complex, promoting RNA polymerase II transcription pause-release.

It localises to the nucleus. Its function is as follows. Appears to be a stable component of the Pol II(G) complex form of RNA polymerase II (Pol II). Pol II synthesizes mRNA precursors and many functional non-coding RNAs and is the central component of the basal RNA polymerase II transcription machinery. May play a role in the Mediator complex-dependent regulation of transcription activation. Acts as a negative regulator of transcriptional activation; this repression is relieved by the Mediator complex, which restores Pol II(G) activator-dependent transcription to a level equivalent to that of Pol II. The polypeptide is DNA-directed RNA polymerase II subunit GRINL1A (Polr2m) (Mus musculus (Mouse)).